The primary structure comprises 148 residues: Large ribosomal subunit protein uL13 (148 aa).

A disordered region spans residues Pro-128–Lys-148.

The protein belongs to the universal ribosomal protein uL13 family. As to quaternary structure, part of the 50S ribosomal subunit.

This protein is one of the early assembly proteins of the 50S ribosomal subunit, although it is not seen to bind rRNA by itself. It is important during the early stages of 50S assembly. The polypeptide is Large ribosomal subunit protein uL13 (Saccharopolyspora erythraea (strain ATCC 11635 / DSM 40517 / JCM 4748 / NBRC 13426 / NCIMB 8594 / NRRL 2338)).